A 299-amino-acid chain; its full sequence is Oxygen-dependent coproporphyrinogen-III oxidase (299 aa).

Substrate is bound at residue S92. Residues H96 and H106 each coordinate a divalent metal cation. H106 functions as the Proton donor in the catalytic mechanism. Residue 108–110 (NVR) coordinates substrate. Positions 145 and 175 each coordinate a divalent metal cation. Positions 239 to 274 (YVEFNLVYDRGTLFGLQSGGRAESILMSLPPQVRWE) are important for dimerization. 257-259 (GGR) contacts substrate.

The protein belongs to the aerobic coproporphyrinogen-III oxidase family. Homodimer. It depends on a divalent metal cation as a cofactor.

The protein localises to the cytoplasm. It carries out the reaction coproporphyrinogen III + O2 + 2 H(+) = protoporphyrinogen IX + 2 CO2 + 2 H2O. It functions in the pathway porphyrin-containing compound metabolism; protoporphyrin-IX biosynthesis; protoporphyrinogen-IX from coproporphyrinogen-III (O2 route): step 1/1. Its function is as follows. Involved in the heme biosynthesis. Catalyzes the aerobic oxidative decarboxylation of propionate groups of rings A and B of coproporphyrinogen-III to yield the vinyl groups in protoporphyrinogen-IX. The sequence is that of Oxygen-dependent coproporphyrinogen-III oxidase from Xanthomonas campestris pv. campestris (strain B100).